The chain runs to 391 residues: Immunoglobulin heavy constant alpha 2 (391 aa).

The Extracellular segment spans residues 1-357 (ASPTSPKVFP…TPGANLWPTT (357 aa)). Ig-like domains follow at residues 6 to 98 (PKVF…QDVT), 112 to 207 (PRLS…ANIT), and 215 to 317 (PEVH…KTID). C26 and C85 form a disulfide bridge. A glycan (N-linked (GlcNAc...) asparagine) is linked at N47. N92 is a glycosylation site (N-linked (GlcNAc...) (complex) asparagine). 2 disulfide bridges follow: C110–C167 and C134–C191. N-linked (GlcNAc...) asparagine glycosylation occurs at N131. N-linked (GlcNAc...) (complex) asparagine glycosylation occurs at N205. A disulfide bond links C237 and C300. A glycan (N-linked (GlcNAc...) (complex) asparagine) is linked at D327. Residues 358 to 379 (ITFLTLFLLSLFYSTALTVTSV) form a helical membrane-spanning segment. The Cytoplasmic segment spans residues 380-391 (RGPSGKREGPQY).

As to quaternary structure, immunoglobulins are composed of two identical heavy chains and two identical light chains; disulfide-linked. Monomeric or polymeric. Part of the secretory IgA (sIgA) complex that consists of two, four or five IgA monomers, and two additional non-Ig polypeptides, namely the JCHAIN and the secretory component (the proteolytic product of PIGR).

The protein resides in the secreted. It is found in the cell membrane. Functionally, constant region of immunoglobulin heavy chains. Immunoglobulins, also known as antibodies, are membrane-bound or secreted glycoproteins produced by B lymphocytes. In the recognition phase of humoral immunity, the membrane-bound immunoglobulins serve as receptors which, upon binding of a specific antigen, trigger the clonal expansion and differentiation of B lymphocytes into immunoglobulins-secreting plasma cells. Secreted immunoglobulins mediate the effector phase of humoral immunity, which results in the elimination of bound antigens. The antigen binding site is formed by the variable domain of one heavy chain, together with that of its associated light chain. Thus, each immunoglobulin has two antigen binding sites with remarkable affinity for a particular antigen. The variable domains are assembled by a process called V-(D)-J rearrangement and can then be subjected to somatic hypermutations which, after exposure to antigen and selection, allow affinity maturation for a particular antigen. Ig alpha is the major immunoglobulin class in body secretions. This is Immunoglobulin heavy constant alpha 2 from Homo sapiens (Human).